Consider the following 196-residue polypeptide: ATP-dependent Clp protease proteolytic subunit (196 aa).

Catalysis depends on serine 101, which acts as the Nucleophile. The active site involves histidine 126.

Belongs to the peptidase S14 family. As to quaternary structure, component of the chloroplastic Clp protease core complex.

It is found in the plastid. The protein localises to the chloroplast stroma. The enzyme catalyses Hydrolysis of proteins to small peptides in the presence of ATP and magnesium. alpha-casein is the usual test substrate. In the absence of ATP, only oligopeptides shorter than five residues are hydrolyzed (such as succinyl-Leu-Tyr-|-NHMec, and Leu-Tyr-Leu-|-Tyr-Trp, in which cleavage of the -Tyr-|-Leu- and -Tyr-|-Trp bonds also occurs).. Functionally, cleaves peptides in various proteins in a process that requires ATP hydrolysis. Has a chymotrypsin-like activity. Plays a major role in the degradation of misfolded proteins. The chain is ATP-dependent Clp protease proteolytic subunit from Lepidium virginicum (Virginia pepperweed).